Reading from the N-terminus, the 525-residue chain is Arylsulfatase G (525 aa).

The signal sequence occupies residues 1–16 (MGWLFLKVLLVGMAFS). Ca(2+) is bound by residues D44, D45, and C84. The Nucleophile role is filled by C84. Position 84 is a 3-oxoalanine (Cys) (C84). Residue N117 is glycosylated (N-linked (GlcNAc...) asparagine). A substrate-binding site is contributed by K137. Residue H139 is part of the active site. S162 is a substrate binding site. N-linked (GlcNAc...) asparagine glycosylation is present at N215. H251 contributes to the substrate binding site. The Ca(2+) site is built by D302 and N303. N-linked (GlcNAc...) asparagine glycosylation is found at N356 and N497.

The protein belongs to the sulfatase family. Ca(2+) serves as cofactor. Post-translationally, N-glycosylated with both high mannose and complex type sugars. The conversion to 3-oxoalanine (also known as C-formylglycine, FGly), of a serine or cysteine residue in prokaryotes and of a cysteine residue in eukaryotes, is critical for catalytic activity. In terms of processing, the 63-kDa precursor undergoes proteolytic processing in two steps, yielding two fragments in the first step (apparent molecular masses of 44 and 18 kDa). In the second step, the 44-kDa fragment is processed further to the 34- and 10-kDa chains. The 10-kDa chain is a cleavage product of the 44-kDa fragment but linked to the 18-kDa chain through a disulfide bridge. As to expression, highly expressed in the spleen, kidney, liver, brain, and testis (at protein level).

It localises to the lysosome. It carries out the reaction an aryl sulfate + H2O = a phenol + sulfate + H(+). The enzyme catalyses Hydrolysis of the 3-sulfate groups of the N-sulfo-D-glucosamine 3-O-sulfate units of heparin.. Functionally, displays arylsulfatase activity at acidic pH towards the artificial substrate p-nitrocatechol sulfate. Catalyzes the hydrolysis of the 3-sulfate groups of the N-sulfo-D-glucosamine 3-O-sulfate units of heparin. This chain is Arylsulfatase G (Arsg), found in Mus musculus (Mouse).